Here is a 724-residue protein sequence, read N- to C-terminus: MLMWPQPHLPTHPHLPTHPHLPTHPHLPTHPHLPTHPMMSKETRQSKLAEAKEQLTDHHPQTNPSVGTAASDTKKKKINNGTNPETTTSGGCHSPEDEQKASHQHQEALRRELEAQVHTIRILTCQKTELQMALYYSQHAVKQLEGEARDLISRLHDSWKFAGELEQALSAVATQKKKADRYIEELTKERDALSLELYRNTITDEELKEKNAELQEKLQLVESEKSEIQLNVKELKRKLERAKLLLPQQQLQAEADHLGKELQSVSAKLQAQVEENELWNRLNQQQEEKMWRQEEKIQEWEEKIQEQEEKIREQEEKIREQEEKMRRQEEMMWEKEEKMRRQEEMMWEKEEKMRRQEEMMWEKEEKIRELEEKMHEQEKIREQEEKRQEEEKIREQEKRQEQEAKMWRQEEKIREQEEKIREQEKKMWRQEEKIHEQEKIREEEKRQEQEEMWRQEEKIREQEEIWRQKEKMHEQEEKIRKQEEKVWRQEEKIREQEEKIREQEEKMWRQEEKIREQEEMWREEEKMHEQEKIWEEEKRQEQEDKMWRQEEKIREQEEKVWRQEEKIREQEEKRQEQEEKMWKQEEKIREQEEKIREQEEKIREQEEKIREQEEMTQEQEEKMGEQEEKMCEQEEKMQEQEETMWRQEEKIREQEKKIREQEEKIREQEEMMQEQEEKMWEQEEKMCEQEEKMQEQEEKMRRQEEKMWEQEVRLRQQEEKMQEH.

5 disordered regions span residues 1–108 (MLMW…HQEA), 314–342 (QEEK…MRRQ), 374–454 (MHEQ…EMWR), 517–548 (QEEM…KMWR), and 561–724 (WRQE…MQEH). The span at 15 to 29 (LPTHPHLPTHPHLPT) shows a compositional bias: basic residues. Residues 39–60 (MSKETRQSKLAEAKEQLTDHHP) are compositionally biased toward basic and acidic residues. 2 stretches are compositionally biased toward polar residues: residues 61-71 (QTNPSVGTAAS) and 79-91 (NNGT…TSGG). Basic and acidic residues predominate over residues 94 to 108 (SPEDEQKASHQHQEA). A coiled-coil region spans residues 164–686 (ELEQALSAVA…EKMWEQEEKM (523 aa)).

The protein belongs to the GOLGA6 family.

This chain is Golgin subfamily A member 6-like protein 6 (GOLGA6L6), found in Homo sapiens (Human).